Here is a 182-residue protein sequence, read N- to C-terminus: Isopentenyl-diphosphate Delta-isomerase (182 aa).

His25 and His32 together coordinate Mn(2+). The 135-residue stretch at 30-164 (LLHLAFSSWL…PWAFSPWMVM (135 aa)) folds into the Nudix hydrolase domain. Cys67 is an active-site residue. Cys67 provides a ligand contact to Mg(2+). His69 lines the Mn(2+) pocket. Position 87 (Glu87) interacts with Mg(2+). Mn(2+) contacts are provided by Glu114 and Glu116. Glu116 is an active-site residue.

This sequence belongs to the IPP isomerase type 1 family. As to quaternary structure, homodimer. Mg(2+) serves as cofactor. The cofactor is Mn(2+).

It localises to the cytoplasm. It catalyses the reaction isopentenyl diphosphate = dimethylallyl diphosphate. It functions in the pathway isoprenoid biosynthesis; dimethylallyl diphosphate biosynthesis; dimethylallyl diphosphate from isopentenyl diphosphate: step 1/1. Catalyzes the 1,3-allylic rearrangement of the homoallylic substrate isopentenyl (IPP) to its highly electrophilic allylic isomer, dimethylallyl diphosphate (DMAPP). The chain is Isopentenyl-diphosphate Delta-isomerase from Shigella boydii serotype 4 (strain Sb227).